The chain runs to 174 residues: D(1B) dopamine receptor (174 aa).

Residues 1 to 10 (SILNLCIISV) form a helical membrane-spanning segment. At 11–32 (DRYWAISRPFCYERKMTQRVAL) the chain is on the cytoplasmic side. Residues 33-54 (VMVGLAWTLSILISFIPVQLHW) traverse the membrane as a helical segment. At 55–96 (HRDKVGSRDGLDPPSNLANGTPWEEAGESDRSAENCDSSLNR) the chain is on the extracellular side. A disordered region spans residues 64 to 88 (GLDPPSNLANGTPWEEAGESDRSAE). A glycan (N-linked (GlcNAc...) asparagine) is linked at Asn95. A helical membrane pass occupies residues 97–119 (TYAISSSLISFYIPVAIMIVTYT). The Cytoplasmic portion of the chain corresponds to 120 to 169 (RIYRIAQVQIRRISSLERAAEHAQSCRSREACAPDSGLRASIKKETKVLK). A helical transmembrane segment spans residues 170–174 (TLSVI).

Belongs to the G-protein coupled receptor 1 family.

The protein localises to the cell membrane. Its function is as follows. Dopamine receptor whose activity is mediated by G proteins which activate adenylyl cyclase. In Bos taurus (Bovine), this protein is D(1B) dopamine receptor (DRD5).